Here is a 405-residue protein sequence, read N- to C-terminus: Tyrosine--tRNA ligase (405 aa).

Positions 46–55 match the 'HIGH' region motif; it reads PTRPDIHLGH. Residues 230–234 carry the 'KMSKS' region motif; that stretch reads KMSKS. Lysine 233 contacts ATP. Residues 341 to 404 form the S4 RNA-binding domain; that stretch reads MGLAALMVKA…GKKKFVKIVV (64 aa).

The protein belongs to the class-I aminoacyl-tRNA synthetase family. TyrS type 2 subfamily. In terms of assembly, homodimer.

Its subcellular location is the cytoplasm. The enzyme catalyses tRNA(Tyr) + L-tyrosine + ATP = L-tyrosyl-tRNA(Tyr) + AMP + diphosphate + H(+). In terms of biological role, catalyzes the attachment of tyrosine to tRNA(Tyr) in a two-step reaction: tyrosine is first activated by ATP to form Tyr-AMP and then transferred to the acceptor end of tRNA(Tyr). This chain is Tyrosine--tRNA ligase, found in Bdellovibrio bacteriovorus (strain ATCC 15356 / DSM 50701 / NCIMB 9529 / HD100).